Consider the following 197-residue polypeptide: Phospholipid hydroperoxide glutathione peroxidase (197 aa).

The residue at position 40 (serine 40) is a Phosphoserine. The active site involves selenocysteine 73. Selenocysteine 73 is a non-standard amino acid (selenocysteine).

This sequence belongs to the glutathione peroxidase family. Monomer. Has a tendency to form higher mass oligomers. Interacts with FUNDC1; this interaction promotes GPX4 recruitment into mitochondria through TOM/TIM complex where it is degraded by mitophagy. As to expression, expressed in testis. Also expressed in liver, lung, kidney and spinal cord.

It localises to the mitochondrion. The protein resides in the cytoplasm. It catalyses the reaction a hydroperoxy polyunsaturated fatty acid + 2 glutathione = a hydroxy polyunsaturated fatty acid + glutathione disulfide + H2O. The enzyme catalyses 2 glutathione + H2O2 = glutathione disulfide + 2 H2O. The catalysed reaction is tert-butyl hydroperoxide + 2 glutathione = tert-butanol + glutathione disulfide + H2O. It carries out the reaction cumene hydroperoxide + 2 glutathione = 2-phenylpropan-2-ol + glutathione disulfide + H2O. It catalyses the reaction (9S)-hydroperoxy-(10E,12Z)-octadecadienoate + 2 glutathione = (9S)-hydroxy-(10E,12Z)-octadecadienoate + glutathione disulfide + H2O. The enzyme catalyses (13S)-hydroperoxy-(9Z,11E)-octadecadienoate + 2 glutathione = (13S)-hydroxy-(9Z,11E)-octadecadienoate + glutathione disulfide + H2O. The catalysed reaction is (5S)-hydroperoxy-(6E,8Z,11Z,14Z)-eicosatetraenoate + 2 glutathione = (5S)-hydroxy-(6E,8Z,11Z,14Z)-eicosatetraenoate + glutathione disulfide + H2O. It carries out the reaction (12R)-hydroperoxy-(5Z,8Z,10E,14Z)-eicosatetraenoate + 2 glutathione = (12R)-hydroxy-(5Z,8Z,10E,14Z)-eicosatetraenoate + glutathione disulfide + H2O. It catalyses the reaction (12S)-hydroperoxy-(5Z,8Z,10E,14Z)-eicosatetraenoate + 2 glutathione = (12S)-hydroxy-(5Z,8Z,10E,14Z)-eicosatetraenoate + glutathione disulfide + H2O. The enzyme catalyses (15S)-hydroperoxy-(5Z,8Z,11Z,13E)-eicosatetraenoate + 2 glutathione = (15S)-hydroxy-(5Z,8Z,11Z,13E)-eicosatetraenoate + glutathione disulfide + H2O. The catalysed reaction is (5S)-hydroperoxy-(6E,8Z,11Z,14Z,17Z)-eicosapentaenoate + 2 glutathione = (5S)-hydroxy-(6E,8Z,11Z,14Z,17Z)-eicosapentaenoate + glutathione disulfide + H2O. It carries out the reaction (12S)-hydroperoxy-(5Z,8Z,10E,14Z,17Z)-eicosapentaenoate + 2 glutathione = (12S)-hydroxy-(5Z,8Z,10E,14Z,17Z)-eicosapentaenoate + glutathione disulfide + H2O. It catalyses the reaction (15S)-hydroperoxy-(5Z,8Z,11Z,13E,17Z)-eicosapentaenoate + 2 glutathione = (15S)-hydroxy-(5Z,8Z,11Z,13E,17Z)-eicosapentaenoate + glutathione disulfide + H2O. The enzyme catalyses (15S)-hydroperoxy-(11Z,13E)-eicosadienoate + 2 glutathione = (15S)-hydroxy-(11Z,13E)-eicosadienoate + glutathione disulfide + H2O. The catalysed reaction is (17S)-hydroperoxy-(4Z,7Z,10Z,13Z,15E,19Z)-docosahexaenoate + 2 glutathione = (17S)-hydroxy-(4Z,7Z,10Z,13Z,15E,19Z)-docosahexaenoate + glutathione disulfide + H2O. It carries out the reaction a hydroperoxy-1,2-diacyl-glycero-3-phosphocholine + 2 glutathione = a hydroxy-1,2-diacyl-glycero-3-phosphocholine + glutathione disulfide + H2O. Functionally, essential antioxidant peroxidase that directly reduces phospholipid hydroperoxide even if they are incorporated in membranes and lipoproteins. Can also reduce fatty acid hydroperoxide, cholesterol hydroperoxide and thymine hydroperoxide. Plays a key role in protecting cells from oxidative damage by preventing membrane lipid peroxidation. Required to prevent cells from ferroptosis, a non-apoptotic cell death resulting from an iron-dependent accumulation of lipid reactive oxygen species. The presence of selenocysteine (Sec) versus Cys at the active site is essential for life: it provides resistance to overoxidation and prevents cells against ferroptosis. The presence of Sec at the active site is also essential for the survival of a specific type of parvalbumin-positive interneurons, thereby preventing against fatal epileptic seizures. May be required to protect cells from the toxicity of ingested lipid hydroperoxides. Required for normal sperm development and male fertility. Essential for maturation and survival of photoreceptor cells. Plays a role in a primary T-cell response to viral and parasitic infection by protecting T-cells from ferroptosis and by supporting T-cell expansion. Plays a role of glutathione peroxidase in platelets in the arachidonic acid metabolism. Reduces hydroperoxy ester lipids formed by a 15-lipoxygenase that may play a role as down-regulator of the cellular 15-lipoxygenase pathway. Can also reduce small soluble hydroperoxides such as H2O2, cumene hydroperoxide and tert-butyl hydroperoxide. This is Phospholipid hydroperoxide glutathione peroxidase from Callithrix jacchus (White-tufted-ear marmoset).